The following is a 511-amino-acid chain: Bifunctional purine biosynthesis protein PurH (511 aa).

The 145-residue stretch at 1–145 (MKQRALVSVS…KNHKFVSVIV (145 aa)) folds into the MGS-like domain.

Belongs to the PurH family.

The enzyme catalyses (6R)-10-formyltetrahydrofolate + 5-amino-1-(5-phospho-beta-D-ribosyl)imidazole-4-carboxamide = 5-formamido-1-(5-phospho-D-ribosyl)imidazole-4-carboxamide + (6S)-5,6,7,8-tetrahydrofolate. It carries out the reaction IMP + H2O = 5-formamido-1-(5-phospho-D-ribosyl)imidazole-4-carboxamide. It functions in the pathway purine metabolism; IMP biosynthesis via de novo pathway; 5-formamido-1-(5-phospho-D-ribosyl)imidazole-4-carboxamide from 5-amino-1-(5-phospho-D-ribosyl)imidazole-4-carboxamide (10-formyl THF route): step 1/1. It participates in purine metabolism; IMP biosynthesis via de novo pathway; IMP from 5-formamido-1-(5-phospho-D-ribosyl)imidazole-4-carboxamide: step 1/1. This Bacillus cereus (strain AH187) protein is Bifunctional purine biosynthesis protein PurH.